A 1312-amino-acid polypeptide reads, in one-letter code: Multidrug resistance protein 3 (1312 aa).

The chain crosses the membrane as a helical span at residues 51–71; that stretch reads GFIDYILLIGGIIGAMAAGVL. In terms of domain architecture, ABC transmembrane type-1 1 spans 59-369; sequence IGGIIGAMAA…VAMPINALST (311 aa). Asn-98 is a glycosylation site (N-linked (GlcNAc...) asparagine). The next 5 membrane-spanning stretches (helical) occupy residues 127-147, 197-217, 224-244, 302-322, and 344-364; these read IYFA…FFVL, KFGV…IGFS, LVIM…GFFA, VVGV…ALGS, and MVVF…AMPI. The ABC transporter 1 domain maps to 404–643; it reads IKLEDVQFRY…KATYYGLVKR (240 aa). Position 439–446 (439–446) interacts with ATP; that stretch reads GASGCGKS. Positions 724–1033 constitute an ABC transmembrane type-1 2 domain; sequence LLSFLGLIGG…LGQMIPDVGK (310 aa). 2 helical membrane passes run 725–745 and 776–796; these read LSFL…FYMI and IWIL…LGLF. N-linked (GlcNAc...) asparagine glycosylation occurs at Asn-819. 3 helical membrane passes run 852 to 872, 874 to 894, and 958 to 978; these read VGNV…AFYY, WKVA…VFLN, and AFVS…SFYI. One can recognise an ABC transporter 2 domain in the interval 1068 to 1307; the sequence is IEFKDICFRY…KGFYYTLAMQ (240 aa). 1103 to 1110 provides a ligand contact to ATP; the sequence is GASGCGKS.

Belongs to the ABC transporter superfamily. ABCB family. Multidrug resistance exporter (TC 3.A.1.201) subfamily.

It is found in the membrane. The catalysed reaction is ATP + H2O + xenobioticSide 1 = ADP + phosphate + xenobioticSide 2.. Its function is as follows. Energy-dependent efflux pump responsible for decreased drug accumulation in multidrug resistance parasites. The protein is Multidrug resistance protein 3 of Entamoeba histolytica (strain ATCC 30459 / HM-1:IMSS / ABRM).